Reading from the N-terminus, the 674-residue chain is Pre-mRNA-splicing factor cwf4 (674 aa).

HAT repeat units lie at residues 50–82, 84–116, 118–150, 152–183, 185–216, 218–253, 255–289, 299–331, 333–367, 377–413, 415–446, 448–480, 482–516, 518–549, 567–608, and 610–643; these read EFQG…WELD, KEFA…CEMK, RNIN…MEEM, GNIT…MERR, HENE…FEEE, GNAA…FEIR, KEYE…FEKQ, TVLD…LEES, GDIN…IWLN, KDVD…FELR, RKID…FEDA, KQFD…LETK, GDSD…FEFE, MEYG…FEIA, TAVV…MHGT, and DTRK…YLFP.

This sequence belongs to the crooked-neck family. Belongs to the 40S cdc5-associated complex (or cwf complex), a spliceosome sub-complex reminiscent of a late-stage spliceosome composed of the U2, U5 and U6 snRNAs and at least brr2, cdc5, cwf2/prp3, cwf3/syf1, cwf4/syf3, cwf5/ecm2, spp42/cwf6, cwf7/spf27, cwf8, cwf9, cwf10, cwf11, cwf12, prp45/cwf13, cwf14, cwf15, cwf16, cwf17, cwf18, cwf19, cwf20, cwf21, cwf22, cwf23, cwf24, cwf25, cwf26, cyp7/cwf27, cwf28, cwf29/ist3, lea1, msl1, prp5/cwf1, prp10, prp12/sap130, prp17, prp22, sap61, sap62, sap114, sap145, slu7, smb1, smd1, smd3, smf1, smg1 and syf2.

The protein localises to the nucleus. Involved in pre-mRNA splicing and cell cycle progression. Required for the spliceosome assembly and initiation of the DNA replication. The sequence is that of Pre-mRNA-splicing factor cwf4 (cwf4) from Schizosaccharomyces pombe (strain 972 / ATCC 24843) (Fission yeast).